A 311-amino-acid polypeptide reads, in one-letter code: MDISVEFSGHKLANVLMNASGIHCMTIKEMDELAASQAGAFVAKTATPNPRQGNEEPRYFDTPLGSINSMGLPNLGIDYYLDYQIARQKEFPEELRFLSVSGMNYEENIAILKKVQESEYTGVTEFNLSCPNLPGKPQIAYDFELTEKLLTEVFQFFTKPLGVKLPPFFDIAHFDAMAEILNKFPLVYVNSINSIGNGLYIDSDKEEVVIKPKGGFGGLGGEYVKPTALANVRAFAQRLKPEIKIIGTGGITCGKDVFEHLLCGATLVQVGTQLHQEGPQVFERLAKELQEIMAAKGYESIEEFRGKLKEM.

Residues serine 20 and 44–45 each bind FMN; that span reads KT. Substrate contacts are provided by residues lysine 44, 68–72, and asparagine 127; that span reads NSMGL. Asparagine 127 is a binding site for FMN. Residue cysteine 130 is the Nucleophile of the active site. FMN is bound by residues lysine 164 and isoleucine 192. 193 to 194 serves as a coordination point for substrate; the sequence is NS. FMN-binding positions include glycine 221, 249-250, and 271-272; these read GG and GT.

It belongs to the dihydroorotate dehydrogenase family. Type 1 subfamily. In terms of assembly, homodimer. The cofactor is FMN.

Its subcellular location is the cytoplasm. It catalyses the reaction (S)-dihydroorotate + fumarate = orotate + succinate. It functions in the pathway pyrimidine metabolism; UMP biosynthesis via de novo pathway. Functionally, catalyzes the conversion of dihydroorotate to orotate with fumarate as the electron acceptor. This chain is Probable dihydroorotate dehydrogenase A (fumarate) (pyrDA), found in Enterococcus faecalis (strain ATCC 700802 / V583).